Consider the following 388-residue polypeptide: GTPase Obg (388 aa).

The region spanning 1 to 159 is the Obg domain; sequence MKFVDEANIR…RSIKLELLLL (159 aa). Residues 160–333 form the OBG-type G domain; the sequence is ADVGLLGMPN…LSIKMLDYIR (174 aa). Residues 166-173, 191-195, 213-216, 283-286, and 314-316 each bind GTP; these read GMPNAGKS, FTTLV, DIPG, NKTD, and SAY. Positions 173 and 193 each coordinate Mg(2+).

The protein belongs to the TRAFAC class OBG-HflX-like GTPase superfamily. OBG GTPase family. As to quaternary structure, monomer. Mg(2+) serves as cofactor.

The protein resides in the cytoplasm. In terms of biological role, an essential GTPase which binds GTP, GDP and possibly (p)ppGpp with moderate affinity, with high nucleotide exchange rates and a fairly low GTP hydrolysis rate. Plays a role in control of the cell cycle, stress response, ribosome biogenesis and in those bacteria that undergo differentiation, in morphogenesis control. The protein is GTPase Obg of Shewanella frigidimarina (strain NCIMB 400).